Reading from the N-terminus, the 111-residue chain is 2Fe-2S ferredoxin (111 aa).

In terms of domain architecture, 2Fe-2S ferredoxin-type spans 2-104 (PKIVILPHQD…DLVVEIPRYT (103 aa)). The [2Fe-2S] cluster site is built by Cys42, Cys48, Cys51, and Cys87.

This sequence belongs to the adrenodoxin/putidaredoxin family. [2Fe-2S] cluster is required as a cofactor.

Ferredoxin are iron-sulfur proteins that transfer electrons in a wide variety of metabolic reactions. Although the function of this ferredoxin is unknown it is probable that it has a role as a cellular electron transfer protein. Involved in the in vivo assembly of the Fe-S clusters in a wide variety of iron-sulfur proteins. The protein is 2Fe-2S ferredoxin (fdx) of Escherichia coli O157:H7.